Here is a 303-residue protein sequence, read N- to C-terminus: Fe-S cluster assembly protein DRE2 (303 aa).

The N-terminal SAM-like domain stretch occupies residues 1 to 125 (MTHSRTALVL…WQKRAVTASA (125 aa)). Positions 126–188 (PVKLAPRQPV…GDAPIAENDL (63 aa)) are linker. The [2Fe-2S] cluster site is built by Cys-202, Cys-213, Cys-216, and Cys-218. The tract at residues 202–218 (CGRTQTRRRKACKDCTC) is fe-S binding site A. Residues Cys-266, Cys-269, Cys-277, and Cys-280 each coordinate [4Fe-4S] cluster. 2 short sequence motifs (cx2C motif) span residues 266 to 269 (CGSC) and 277 to 280 (CSGC). The interval 266-280 (CGSCSLGDAFRCSGC) is fe-S binding site B.

This sequence belongs to the anamorsin family. Monomer. Interacts with TAH18. Interacts with MIA40. Requires [2Fe-2S] cluster as cofactor. The cofactor is [4Fe-4S] cluster.

Its subcellular location is the cytoplasm. It localises to the mitochondrion intermembrane space. Its function is as follows. Component of the cytosolic iron-sulfur (Fe-S) protein assembly (CIA) machinery required for the maturation of extramitochondrial Fe-S proteins. Part of an electron transfer chain functioning in an early step of cytosolic Fe-S biogenesis, facilitating the de novo assembly of a [4Fe-4S] cluster on the scaffold complex CFD1-NBP35. Electrons are transferred to DRE2 from NADPH via the FAD- and FMN-containing protein TAH18. TAH18-DRE2 are also required for the assembly of the diferric tyrosyl radical cofactor of ribonucleotide reductase (RNR), probably by providing electrons for reduction during radical cofactor maturation in the catalytic small subunit RNR2. The chain is Fe-S cluster assembly protein DRE2 from Eremothecium gossypii (strain ATCC 10895 / CBS 109.51 / FGSC 9923 / NRRL Y-1056) (Yeast).